The following is a 281-amino-acid chain: Undecaprenyl-diphosphatase (281 aa).

Transmembrane regions (helical) follow at residues 5–25 (LFVLKSIVLGIVEGVTEFLPI), 48–68 (VKMYTYVIQLGAIMAVVLLYW), 92–112 (FWFMIFIACIPGAAVKLLLDA), 118–138 (LMTPVSVAIVLILGGLWMIYA), 154–174 (VTPKQALIIGAFQCLAIIPGM), 192–212 (VVAAEFSFFLAIPVMFGYSLL), 226–246 (AELISLVVGFIVAFIVAVAVI), and 261–281 (FAIYRMIFAVIVLIAGFMGFF).

The protein belongs to the UppP family.

It is found in the cell membrane. The catalysed reaction is di-trans,octa-cis-undecaprenyl diphosphate + H2O = di-trans,octa-cis-undecaprenyl phosphate + phosphate + H(+). Its function is as follows. Catalyzes the dephosphorylation of undecaprenyl diphosphate (UPP). Confers resistance to bacitracin. This is Undecaprenyl-diphosphatase from Ruminiclostridium cellulolyticum (strain ATCC 35319 / DSM 5812 / JCM 6584 / H10) (Clostridium cellulolyticum).